Reading from the N-terminus, the 119-residue chain is C-X-C motif chemokine 17 (119 aa).

Residues 1-22 (MKLLASPFLLLLPVMLMSMVFS) form the signal peptide. The interval 75–100 (CPCDHVKGREKKNRHQKHHRKSQRPS) is disordered. 2 cysteine pairs are disulfide-bonded: C75–C103 and C77–C110. A compositionally biased stretch (basic residues) spans 82–98 (GREKKNRHQKHHRKSQR).

This sequence belongs to the intercrine alpha (chemokine CxC) family. Likely to undergo an endoproteolytic process to form a four-cysteine-containing mature peptide with a canonical CXC chemokine scaffold after secretion. Detected in lung, trachea, lung, tongue thyroid, submaxillary gland, epididymis, and uterus tissues and at a lower level in ovary, prostate and in intestinal tissues.

It is found in the secreted. In terms of biological role, chemokine that acts as a chemoattractant for monocytes, macrophages and dendritic cells. Plays a role in angiogenesis and possibly in the development of tumors. Acts as an anti-inflammatory in the stomach. May play a role in the innate defense against infections. Activates the C-X-C chemokine receptor GPR35 to induce a rapid and transient rise in the level of intracellular calcium ions. The protein is C-X-C motif chemokine 17 (Cxcl17) of Mus musculus (Mouse).